Here is an 85-residue protein sequence, read N- to C-terminus: Ice-structuring protein 4 (85 aa).

The first 21 residues, 1–21, serve as a signal peptide directing secretion; the sequence is MRITEANPDPDAKAVPAAAAP.

The protein belongs to the type-I AFP family.

The protein resides in the secreted. In terms of biological role, contributes to protect fish blood from freezing at subzero sea water temperatures. Lowers the blood freezing point. Binds to nascent ice crystals and prevents further growth. The sequence is that of Ice-structuring protein 4 from Pseudopleuronectes americanus (Winter flounder).